The sequence spans 175 residues: uncharacterized protein (175 aa).

It belongs to the asfivirus B175L family.

This is an uncharacterized protein from African swine fever virus (strain Badajoz 1971 Vero-adapted) (Ba71V).